The chain runs to 969 residues: RNA polymerase-associated protein RapA (969 aa).

Residues 162 to 339 enclose the Helicase ATP-binding domain; that stretch reads EVGQRVAPRV…FARLALLDAD (178 aa). An ATP-binding site is contributed by 175–182; it reads DEVGLGKT. The DEAH box signature appears at 285–288; that stretch reads DEAH. Residues 492–663 form the Helicase C-terminal domain; that stretch reads RIEWLITFLK…GFLKNPQAVG (172 aa).

The protein belongs to the SNF2/RAD54 helicase family. RapA subfamily. As to quaternary structure, interacts with the RNAP. Has a higher affinity for the core RNAP than for the holoenzyme. Its ATPase activity is stimulated by binding to RNAP.

In terms of biological role, transcription regulator that activates transcription by stimulating RNA polymerase (RNAP) recycling in case of stress conditions such as supercoiled DNA or high salt concentrations. Probably acts by releasing the RNAP, when it is trapped or immobilized on tightly supercoiled DNA. Does not activate transcription on linear DNA. Probably not involved in DNA repair. This is RNA polymerase-associated protein RapA from Actinobacillus pleuropneumoniae serotype 5b (strain L20).